The following is a 467-amino-acid chain: Asparagine--tRNA ligase (467 aa).

It belongs to the class-II aminoacyl-tRNA synthetase family. Homodimer.

The protein resides in the cytoplasm. The catalysed reaction is tRNA(Asn) + L-asparagine + ATP = L-asparaginyl-tRNA(Asn) + AMP + diphosphate + H(+). In Legionella pneumophila (strain Paris), this protein is Asparagine--tRNA ligase.